Consider the following 101-residue polypeptide: NADH-quinone oxidoreductase subunit K (101 aa).

Transmembrane regions (helical) follow at residues 4-24 (LEHY…GIFL), 30-50 (IVIL…LVAF), and 65-85 (FVLT…VTFF).

The protein belongs to the complex I subunit 4L family. As to quaternary structure, NDH-1 is composed of 14 different subunits. Subunits NuoA, H, J, K, L, M, N constitute the membrane sector of the complex.

It is found in the cell inner membrane. It catalyses the reaction a quinone + NADH + 5 H(+)(in) = a quinol + NAD(+) + 4 H(+)(out). Its function is as follows. NDH-1 shuttles electrons from NADH, via FMN and iron-sulfur (Fe-S) centers, to quinones in the respiratory chain. The immediate electron acceptor for the enzyme in this species is believed to be ubiquinone. Couples the redox reaction to proton translocation (for every two electrons transferred, four hydrogen ions are translocated across the cytoplasmic membrane), and thus conserves the redox energy in a proton gradient. This chain is NADH-quinone oxidoreductase subunit K, found in Cereibacter sphaeroides (strain ATCC 17029 / ATH 2.4.9) (Rhodobacter sphaeroides).